The chain runs to 362 residues: G-protein coupled receptor homolog US27 (362 aa).

Topologically, residues 1–34 (MTTSTNNQTLTQVSNMTNHTLNSTEIYQLFEYTR) are virion surface. Residues N7, N15, N18, and N22 are each glycosylated (N-linked (GlcNAc...) asparagine; by host). The helical transmembrane segment at 35–58 (LGVWLMCIVGTFLNVLVITTILYY) threads the bilayer. Topologically, residues 59–67 (RRKKKSPSD) are intravirion. A helical transmembrane segment spans residues 68–90 (TYICNLAVADLLIVVGLPFFLEY). Over 91–104 (AKHHPKLSREVVCS) the chain is Virion surface. The helical transmembrane segment at 105–126 (GLNACFYICLFAGVCFLINLSM) threads the bilayer. The Intravirion segment spans residues 127–148 (DRYCVIVWGVELNRVRNNKRAT). Residues 149–167 (CWVVIFWILAVLMGMPHYL) form a helical membrane-spanning segment. At 168-193 (MYSHTNNECVGEFANETSGWFPVFLN) the chain is on the virion surface side. The helical transmembrane segment at 194-213 (TKVNICGYLAPIALMAYTYN) threads the bilayer. Topologically, residues 214–233 (RMVRFIINYVGKWHMQTLHV) are intravirion. The chain crosses the membrane as a helical span at residues 234-257 (LLVVVVSFASFWFPFNLALFLESI). At 258 to 274 (RLLAGVYNDTLQNVIIF) the chain is on the virion surface side. The helical transmembrane segment at 275–298 (CLYVGQFLAYVRACLNPGIYILVG) threads the bilayer. Topologically, residues 299-362 (TQMRKDMWTT…MESGEEEFLL (64 aa)) are intravirion. Positions 341 to 362 (TKRTHYDRKNAPMESGEEEFLL) are disordered.

It belongs to the G-protein coupled receptor 1 family. As to quaternary structure, heterodimer with US28. Interacts with host Gi alpha-1 subunit GNAI1; this interaction does not lead to the catalytic activation of Gi complex.

Its subcellular location is the virion. The protein localises to the host cell membrane. In terms of biological role, interacts with the host Gi complex without activating it, thereby probably interfering with the chemokine-Gi signaling. May also function as a G protein sink to sequester G protein from the cell surface via internalization. Plays an important role in spread of HCMV via the extracellular route. The polypeptide is G-protein coupled receptor homolog US27 (US27) (Homo sapiens (Human)).